The sequence spans 274 residues: Outer surface protein A (274 aa).

The signal sequence occupies residues 1–16; that stretch reads MKKYLLGIGLILALIA. The N-palmitoyl cysteine moiety is linked to residue cysteine 17. The S-diacylglycerol cysteine moiety is linked to residue cysteine 17.

It belongs to the OspA lipoprotein family.

Its subcellular location is the cell outer membrane. The protein resides in the cell surface. In Borreliella burgdorferi (Lyme disease spirochete), this protein is Outer surface protein A.